A 785-amino-acid polypeptide reads, in one-letter code: Pre-rRNA-processing protein TSR1 homolog (785 aa).

Residues Met1–Arg59 are disordered. Basic residues predominate over residues Gly9–Arg25. Over residues Thr26 to Val40 the composition is skewed to basic and acidic residues. One can recognise a Bms1-type G domain in the interval Ala83–Lys243. The segment at Pro307–Phe426 is disordered. Over residues Leu376 to Met409 the composition is skewed to acidic residues.

The protein belongs to the TRAFAC class translation factor GTPase superfamily. Bms1-like GTPase family. TSR1 subfamily.

It is found in the nucleus. The protein resides in the nucleolus. Its function is as follows. Required during maturation of the 40S ribosomal subunit in the nucleolus. The polypeptide is Pre-rRNA-processing protein TSR1 homolog (tag-151) (Caenorhabditis elegans).